The chain runs to 142 residues: MDDLADCREVFAYFDSKGDERISVQQVGDVLRALGQNPTEAEIHKCVGSFDREARLSFEDFVPIFQSVSKNREKHTVEEFVEGLSHFDKEGNGMINVAELRHLLTTLGERLSDEDVDQLLSGHNDSHGNVNISDFVRAVMNS.

2 EF-hand domains span residues Asp2–Asn37 and His75–Arg110.

In terms of assembly, myosin is a hexamer of 2 heavy chains and 4 light chains (two regulatory light chains and two essential light chains).

It localises to the cytoplasm. The protein resides in the cytoskeleton. Functionally, required for cytokinesis and embryo elongation. May regulate myosin II complex formation and/or the association of myosin with actin. May be involved in the organization of mlc-4 and nmy-2 into bundles. The protein is Myosin-2 essential light chain of Caenorhabditis elegans.